Consider the following 458-residue polypeptide: uncharacterized protein (458 aa).

A TRAM domain is found at 5 to 65 (QAPVNKNDVV…KGYGFGRVLN (61 aa)). Cys78, Cys84, Cys87, and Cys165 together coordinate [4Fe-4S] cluster. Positions 289, 318, 339, and 387 each coordinate S-adenosyl-L-methionine. The active-site Nucleophile is Cys414.

It belongs to the class I-like SAM-binding methyltransferase superfamily. RNA M5U methyltransferase family.

This is an uncharacterized protein from Halalkalibacterium halodurans (strain ATCC BAA-125 / DSM 18197 / FERM 7344 / JCM 9153 / C-125) (Bacillus halodurans).